Consider the following 371-residue polypeptide: Macrolide export protein MacA (371 aa).

Over 1-10 (MKKRKTVKKR) the chain is Cytoplasmic. The chain crosses the membrane as a helical span at residues 11–31 (YVIALVIVIAGLITLWRILNA). Over 32–371 (PVPTYQTLIV…IGEAKPGAAQ (340 aa)) the chain is Periplasmic. Residues 92-137 (IDPEQAENQIKEVEATLMELRAQRQQAEAELKLARVTYSRQQRLAQ) adopt a coiled-coil conformation.

The protein belongs to the membrane fusion protein (MFP) (TC 8.A.1) family. Homohexamer. Part of the tripartite efflux system MacAB-TolC, which is composed of an inner membrane transporter, MacB, a periplasmic membrane fusion protein, MacA, and an outer membrane component, TolC. The complex forms a large protein conduit and can translocate molecules across both the inner and outer membranes. MacA interacts with MacB and TolC.

It is found in the cell inner membrane. In terms of biological role, part of the tripartite efflux system MacAB-TolC. MacA stimulates the ATPase activity of MacB by promoting the closed ATP-bound state of MacB, increases the capacity of MacB to bind macrolides such as erythromycin, and provides a physical link between MacB and TolC. Confers resistance against macrolides. This chain is Macrolide export protein MacA (macA), found in Escherichia coli O157:H7.